The sequence spans 144 residues: Ig heavy chain V region M167 (144 aa).

The first 19 residues, 1-19, serve as a signal peptide directing secretion; that stretch reads MKMWLNWVFLLTLLHGIQC. Residues 20–133 enclose the Ig-like domain; the sequence is EVKVVESGGG…GNSYFGYFDV (114 aa).

The polypeptide is Ig heavy chain V region M167 (Mus musculus (Mouse)).